A 352-amino-acid polypeptide reads, in one-letter code: MEQQELFDVTVIGGGPAGLYSTFYSGLRGMKTKLIEYQAELGGKIHVYPEKMIWDVGGQPPITGAKLMEQLVEQGLTFNPTVHLNEKIISITKDVFGNFVLEAESGMIHYSKTVIVAVGGGILNPQKLKIEGAERYEVSNLNYTVKSIERFKDKTVIISGGGNSAIDWANELEPVAKKVYVTYRKDCFTGHEAQVEQLVNSSAVCLLNTTIHKLIASDDHHRIASVELIDCTTNETVALEIDEVIINHGYEQDAELLANCDLDLQQVDDFYIAGTASSESSVPGLYAAGDILSHEGKVHLISGAFQDAANAVNRAKKYIEPEAPKVAMVSSHNEVFKKRNRELIQEMVNQNR.

Positions 36, 44, 48, 88, 123, 290, and 331 each coordinate FAD.

This sequence belongs to the ferredoxin--NADP reductase type 2 family. As to quaternary structure, homodimer. The cofactor is FAD.

It carries out the reaction 2 reduced [2Fe-2S]-[ferredoxin] + NADP(+) + H(+) = 2 oxidized [2Fe-2S]-[ferredoxin] + NADPH. This Exiguobacterium sibiricum (strain DSM 17290 / CCUG 55495 / CIP 109462 / JCM 13490 / 255-15) protein is Ferredoxin--NADP reductase 2.